The sequence spans 90 residues: Cluster 41 protein AFLA_114800 (90 aa).

The helical transmembrane segment at Gly-55–Val-77 threads the bilayer. Asn-80 carries N-linked (GlcNAc...) asparagine glycosylation.

It localises to the membrane. Functionally, cluster 41 protein; part of the gene cluster 41 that mediates the biosynthesis of an extracellular and diffusible metabolite that is able to stimulate colony sclerotial production. The sequence is that of Cluster 41 protein AFLA_114800 from Aspergillus flavus (strain ATCC 200026 / FGSC A1120 / IAM 13836 / NRRL 3357 / JCM 12722 / SRRC 167).